The following is a 207-amino-acid chain: Large ribosomal subunit protein uL4 (207 aa).

Positions 49–78 (HAVKNRSAVSGGGRKPWRQKGTGRARQGSI) are disordered.

Belongs to the universal ribosomal protein uL4 family. Part of the 50S ribosomal subunit.

Its function is as follows. One of the primary rRNA binding proteins, this protein initially binds near the 5'-end of the 23S rRNA. It is important during the early stages of 50S assembly. It makes multiple contacts with different domains of the 23S rRNA in the assembled 50S subunit and ribosome. Forms part of the polypeptide exit tunnel. The protein is Large ribosomal subunit protein uL4 of Streptococcus equi subsp. zooepidemicus (strain H70).